Consider the following 232-residue polypeptide: Ion-translocating oxidoreductase complex subunit E (232 aa).

6 helical membrane passes run alanine 18–glycine 38, leucine 39–isoleucine 59, isoleucine 69–alanine 89, glutamate 93–glycine 113, alanine 128–methionine 148, and proline 182–alanine 202.

It belongs to the NqrDE/RnfAE family. As to quaternary structure, the complex is composed of six subunits: RnfA, RnfB, RnfC, RnfD, RnfE and RnfG.

It localises to the cell inner membrane. Its function is as follows. Part of a membrane-bound complex that couples electron transfer with translocation of ions across the membrane. This is Ion-translocating oxidoreductase complex subunit E from Pseudoalteromonas atlantica (strain T6c / ATCC BAA-1087).